The following is a 354-amino-acid chain: Malate dehydrogenase 1, peroxisomal (354 aa).

The segment at 6-14 (RIARISAHL) is peroxisomal targeting signal PTS2. NAD(+)-binding positions include 49 to 55 (GAAGGIG) and Asp-75. Substrate-binding residues include Arg-122 and Arg-128. Residues Asn-135 and 158-160 (ISN) each bind NAD(+). Positions 160 and 194 each coordinate substrate. His-218 serves as the catalytic Proton acceptor. Met-269 contributes to the NAD(+) binding site.

This sequence belongs to the LDH/MDH superfamily. MDH type 1 family. In terms of assembly, homodimer. Expressed in rosette leaves at low levels.

It is found in the peroxisome. It carries out the reaction (S)-malate + NAD(+) = oxaloacetate + NADH + H(+). Functionally, catalyzes a reversible NAD-dependent dehydrogenase reaction involved in central metabolism and redox homeostasis between organelle compartments. Peroxisomal NAD-dependent malate dehydrogenase involved in fatty acid beta-oxidation. Reoxidizes NADH from the beta-oxidation and provides NAD for the conversion of fatty acyl-CoA to acetyl-CoA. Does not participate directly in the glyoxylate cycle. Required for maintenance of photosynthetic rates under photorespiratory conditions, and carbon flow during photorespiration. Supplies NADH reductant to the peroxisomal hydroxypyruvate reductase (HPR), which reduces hydroxypyruvate into glycerate in the photorespiratory cycle. The polypeptide is Malate dehydrogenase 1, peroxisomal (Arabidopsis thaliana (Mouse-ear cress)).